We begin with the raw amino-acid sequence, 466 residues long: MSLSLWQQCLARLQDELPATEFSMWIRPLQAELSDNTLALYAPNRFVLDWVRDKYLNNINGLLNTFCGADAPQLRFEVGTKPVTQTLKTPVHNVVAPAQTTTAQPQRVAPAARSGWDNVPAPAEPTYRSNVNVKHTFDNFVEGKSNQLARAAARQVADNPGGAYNPLFLYGGTGLGKTHLLHAVGNGIMARKPNAKVVYMHSERFVQDMVKALQNNAIEEFKRYYRSVDALLIDDIQFFANKERSQEEFFHTFNALLEGNQQIILTSDRYPKEINGVEDRLKSRFGWGLTVAIEPPELETRVAILMKKADENDIRLPGEVAFFIAKRLRSNVRELEGALNRVIANANFTGRAITIDFVREALRDLLALQEKLVTIDNIQKTVAEYYKIKIADLLSKRRSRSVARPRQMAMALAKELTNHSLPEIGDAFGGRDHTTVLHACRKIEQLREESHDIKEDFSNLIRTLSS.

The domain I, interacts with DnaA modulators stretch occupies residues 1-86; that stretch reads MSLSLWQQCL…EVGTKPVTQT (86 aa). The domain II stretch occupies residues 86 to 129; it reads TLKTPVHNVVAPAQTTTAQPQRVAPAARSGWDNVPAPAEPTYRS. The segment at 130–346 is domain III, AAA+ region; that stretch reads NVNVKHTFDN…GALNRVIANA (217 aa). ATP contacts are provided by G174, G176, K177, and T178. The tract at residues 347–466 is domain IV, binds dsDNA; that stretch reads NFTGRAITID…FSNLIRTLSS (120 aa).

It belongs to the DnaA family. Oligomerizes as a right-handed, spiral filament on DNA at oriC.

It is found in the cytoplasm. Plays an essential role in the initiation and regulation of chromosomal replication. ATP-DnaA binds to the origin of replication (oriC) to initiate formation of the DNA replication initiation complex once per cell cycle. Binds the DnaA box (a 9 base pair repeat at the origin) and separates the double-stranded (ds)DNA. Forms a right-handed helical filament on oriC DNA; dsDNA binds to the exterior of the filament while single-stranded (ss)DNA is stabiized in the filament's interior. The ATP-DnaA-oriC complex binds and stabilizes one strand of the AT-rich DNA unwinding element (DUE), permitting loading of DNA polymerase. After initiation quickly degrades to an ADP-DnaA complex that is not apt for DNA replication. Binds acidic phospholipids. The polypeptide is Chromosomal replication initiator protein DnaA (Salmonella agona (strain SL483)).